Consider the following 584-residue polypeptide: MSLLQIYWRALQYLAAYRLKVSLVVAANIILAVITIAEPILFGWIIDAISSGKPDKDILFLWGGFGIFNTIAFVLVAREADRLAHGRRASLLTEAFGRIISMPLSWHHQRGTSNALHTLLRASETLFGLWLEFMRTHLATAVALVLLVPTAFSMDVRLTLVLIVLGLIYVAIGKMVMDKTKDGQASVESHYHTVFSHVSDTISNVSVVHSYNRIQAETSALKTFTSKLLDAQYPVLDWWAIASGLNRIASTASMLIILIIGTMLVQSGELRVGDVIAFIGFANLLIARLDQMRQFSTQIFEARAKLEDFYVLEDSVQDRDEPVGNRDLKSVRGDVEFRHVSFDFANTTQGVKDVSFTVKAGQTIAIVGPTGAGKTTLINLLQRVHEPQQGQILIDGADISTITRQSLRNSIATVFQDAGILNRSIADNIRIGRENATDEDIVKAAEAAAATDFIESRLSGFDTDVGERGNRLSGGERQRIAIARAILKDAPILVLDEATSALDVETEERVKSAIDRLRQNRTTFIIAHRLSTVREADQVLFLDHGRIVEMGGYDELSAKGGRFAALLHTSGLLNDDDKTAVKVG.

The region spanning 21–301 (VSLVVAANII…MRQFSTQIFE (281 aa)) is the ABC transmembrane type-1 domain. The next 6 helical transmembrane spans lie at 29-49 (IILA…IDAI), 57-77 (DILF…VLVA), 136-156 (THLA…SMDV), 158-178 (LTLV…MVMD), 248-268 (IAST…VQSG), and 272-292 (VGDV…LDQM). Residues 335–569 (VEFRHVSFDF…GGRFAALLHT (235 aa)) enclose the ABC transporter domain. 368–375 (GPTGAGKT) contributes to the ATP binding site.

The protein belongs to the ABC transporter superfamily. Beta-(1--&gt;2)glucan exporter (TC 3.A.1.108.1) family. In terms of assembly, homodimer.

The protein localises to the cell inner membrane. It carries out the reaction [(1-&gt;2)-beta-D-glucosyl](n)(in) + ATP + H2O = [(1-&gt;2)-beta-D-glucosyl](n)(out) + ADP + phosphate + H(+). Functionally, involved in beta-(1--&gt;2)glucan export. Transmembrane domains (TMD) form a pore in the inner membrane and the ATP-binding domain (NBD) is responsible for energy generation. The protein is Beta-(1--&gt;2)glucan export ATP-binding/permease protein NdvA of Agrobacterium vitis (Rhizobium vitis).